A 154-amino-acid chain; its full sequence is MSEDIYQNLKQLGGETRIPASPEEAELERVANPQADVAYNVRFTAPEFTSLCPMTGQPDFAHLVIDYVPGPWLVESKSLKLFLTSFRNHGAFHEDCTISIARRLVDFLDPQWLRIGGYWYPRGGIPIDVFWQSGTIPEGVWIPDQGVPPYRGRG.

Cysteine 52 serves as the catalytic Thioimide intermediate. The active-site Proton donor is aspartate 59. Residues 74 to 76 (VES) and 93 to 94 (HE) contribute to the substrate site.

This sequence belongs to the GTP cyclohydrolase I family. QueF type 1 subfamily.

The protein resides in the cytoplasm. It catalyses the reaction 7-aminomethyl-7-carbaguanine + 2 NADP(+) = 7-cyano-7-deazaguanine + 2 NADPH + 3 H(+). It participates in tRNA modification; tRNA-queuosine biosynthesis. Catalyzes the NADPH-dependent reduction of 7-cyano-7-deazaguanine (preQ0) to 7-aminomethyl-7-deazaguanine (preQ1). The polypeptide is NADPH-dependent 7-cyano-7-deazaguanine reductase (Ruegeria sp. (strain TM1040) (Silicibacter sp.)).